We begin with the raw amino-acid sequence, 218 residues long: 25.3 kDa vesicle transport protein SEC22-1 (218 aa).

Residues 1-192 (MVKMTLIARV…DKAKDLNRQA (192 aa)) are Cytoplasmic-facing. Residues 6–120 (LIARVTDGLP…YAFIKFDTFI (115 aa)) enclose the Longin domain. Positions 135–195 (NIAKLNDELY…KDLNRQALIR (61 aa)) constitute a v-SNARE coiled-coil homology domain. A helical; Anchor for type IV membrane protein membrane pass occupies residues 193–213 (LIRKWAPVAIVFGVVFLLFWV). Topologically, residues 214–218 (KNKLW) are vesicular.

This sequence belongs to the synaptobrevin family. As to quaternary structure, interacts with SEC24A. As to expression, mainly expressed in flowers and siliques, to a lower extent in seedlings, and barely in roots and leaves.

It localises to the golgi apparatus membrane. The protein localises to the endoplasmic reticulum membrane. Its function is as follows. V-SNARE involved in vesicle trafficking from the ER to the Golgi complex and required for early secretion. Involved in endoplasmic reticulum (ER) biogenesis and functions as well as for Golgi-stack integrity. Essential for gametophytes development. Involved in cesium Cs(+) accumulation, a non-essential cation. The sequence is that of 25.3 kDa vesicle transport protein SEC22-1 from Arabidopsis thaliana (Mouse-ear cress).